We begin with the raw amino-acid sequence, 480 residues long: Radical SAM Nalpha-GlyT isomerase (480 aa).

Iron-sulfur cluster contacts are provided by C125, C129, and C132. The segment at K457 to D480 is disordered.

It catalyses the reaction 5-N(alpha)-glycyl-dTMP in DNA + AH2 + S-adenosyl-L-methionine = 5-C(alpha)-glycyl-dTMP in DNA + 5'-deoxyadenosine + L-methionine + A + H(+). Its function is as follows. Isomerizes 5-N-alpha-glycinylthymidine (Nalpha-GlyT) into 5-Calpha-glycinylthymidine (Calpha-GlyT) as a step in the pathway leading to thymidine hypermodifications in the viral genome. As a final result of the pathway of hypermodification, 5-aminoethyl-2'-deoxyuridine (5-NedU) substitutes for about 30% of thymidines in the viral DNA. These modifications probably prevent degradation of viral genome by the host restriction-modification antiviral defense system. This chain is Radical SAM Nalpha-GlyT isomerase, found in Pseudomonas phage M6.